The primary structure comprises 325 residues: D-alanine--D-alanine ligase (325 aa).

Residues 107 to 311 enclose the ATP-grasp domain; the sequence is KRLLLSESLP…YEALCVEVLK (205 aa). 137–192 contacts ATP; sequence VDTLGLPLIVKPAREGSSLGLSKVTERAAMAAAVALAEKMDADILCEQFISGDEVT. Mg(2+)-binding residues include aspartate 264, glutamate 278, and asparagine 280.

This sequence belongs to the D-alanine--D-alanine ligase family. Requires Mg(2+) as cofactor. The cofactor is Mn(2+).

The protein localises to the cytoplasm. It carries out the reaction 2 D-alanine + ATP = D-alanyl-D-alanine + ADP + phosphate + H(+). The protein operates within cell wall biogenesis; peptidoglycan biosynthesis. Cell wall formation. In Polaromonas naphthalenivorans (strain CJ2), this protein is D-alanine--D-alanine ligase.